A 274-amino-acid polypeptide reads, in one-letter code: Triosephosphate isomerase (274 aa).

Residue 13–15 participates in substrate binding; sequence NWK. Residue H98 is the Electrophile of the active site. Catalysis depends on E170, which acts as the Proton acceptor. Residues G176 and S216 each coordinate substrate.

This sequence belongs to the triosephosphate isomerase family. In terms of assembly, homodimer.

Its subcellular location is the cytoplasm. The enzyme catalyses D-glyceraldehyde 3-phosphate = dihydroxyacetone phosphate. Its pathway is carbohydrate biosynthesis; gluconeogenesis. It functions in the pathway carbohydrate degradation; glycolysis; D-glyceraldehyde 3-phosphate from glycerone phosphate: step 1/1. Its function is as follows. Involved in the gluconeogenesis. Catalyzes stereospecifically the conversion of dihydroxyacetone phosphate (DHAP) to D-glyceraldehyde-3-phosphate (G3P). The chain is Triosephosphate isomerase from Aster yellows witches'-broom phytoplasma (strain AYWB).